Here is a 408-residue protein sequence, read N- to C-terminus: Argininosuccinate synthase (408 aa).

ATP-binding positions include 11–19 and A38; that span reads AYSGGLDTS. The L-citrulline site is built by Y91 and S96. G121 provides a ligand contact to ATP. Positions 123, 127, and 128 each coordinate L-aspartate. Position 127 (N127) interacts with L-citrulline. 5 residues coordinate L-citrulline: R131, S182, S191, E267, and Y279.

It belongs to the argininosuccinate synthase family. Type 1 subfamily. In terms of assembly, homotetramer.

It is found in the cytoplasm. It catalyses the reaction L-citrulline + L-aspartate + ATP = 2-(N(omega)-L-arginino)succinate + AMP + diphosphate + H(+). The protein operates within amino-acid biosynthesis; L-arginine biosynthesis; L-arginine from L-ornithine and carbamoyl phosphate: step 2/3. The protein is Argininosuccinate synthase of Azorhizobium caulinodans (strain ATCC 43989 / DSM 5975 / JCM 20966 / LMG 6465 / NBRC 14845 / NCIMB 13405 / ORS 571).